The chain runs to 212 residues: MTDLSDIRREYAKGGLRRADLPQNPMDLFALWMTQARDAELSDPTAMCVATVDEQGQPFQRIVLLKRFDDTGFVFFTNLGSRKAQQIAANNKVSLHFPWHPLERQVSVLGEAQALSTTEVLKYFMTRPKDSQIAAWVSQQSSKLSARQVLEGKFFEMKAKFAKGDVPLPSFWGGYLVRPKSIEFWQGGEHRLHDRFIYTLDNTQWIIDRLAP.

Residues R8–Y11 and K66 contribute to the substrate site. Residues R61–K66, F76–T77, R82, K83, and Q105 each bind FMN. Substrate contacts are provided by Y123, R127, and S131. Residues Q140–S141 and W185 each bind FMN. R191–H193 contributes to the substrate binding site. Residue R195 coordinates FMN.

This sequence belongs to the pyridoxamine 5'-phosphate oxidase family. As to quaternary structure, homodimer. FMN is required as a cofactor.

It carries out the reaction pyridoxamine 5'-phosphate + O2 + H2O = pyridoxal 5'-phosphate + H2O2 + NH4(+). It catalyses the reaction pyridoxine 5'-phosphate + O2 = pyridoxal 5'-phosphate + H2O2. It participates in cofactor metabolism; pyridoxal 5'-phosphate salvage; pyridoxal 5'-phosphate from pyridoxamine 5'-phosphate: step 1/1. It functions in the pathway cofactor metabolism; pyridoxal 5'-phosphate salvage; pyridoxal 5'-phosphate from pyridoxine 5'-phosphate: step 1/1. Catalyzes the oxidation of either pyridoxine 5'-phosphate (PNP) or pyridoxamine 5'-phosphate (PMP) into pyridoxal 5'-phosphate (PLP). This Shewanella putrefaciens (strain CN-32 / ATCC BAA-453) protein is Pyridoxine/pyridoxamine 5'-phosphate oxidase.